The following is a 390-amino-acid chain: Lipid-A-disaccharide synthase (390 aa).

It belongs to the LpxB family.

It catalyses the reaction a lipid X + a UDP-2-N,3-O-bis[(3R)-3-hydroxyacyl]-alpha-D-glucosamine = a lipid A disaccharide + UDP + H(+). The protein operates within bacterial outer membrane biogenesis; LPS lipid A biosynthesis. Functionally, condensation of UDP-2,3-diacylglucosamine and 2,3-diacylglucosamine-1-phosphate to form lipid A disaccharide, a precursor of lipid A, a phosphorylated glycolipid that anchors the lipopolysaccharide to the outer membrane of the cell. This Haemophilus influenzae (strain PittEE) protein is Lipid-A-disaccharide synthase.